Here is a 168-residue protein sequence, read N- to C-terminus: Tyrosine-protein phosphatase (168 aa).

Positions 24–168 (FKTPLRPELF…RQNYVQDLLI (145 aa)) constitute a Tyrosine-protein phosphatase domain. Residue C119 is the Phosphocysteine intermediate of the active site.

This sequence belongs to the protein-tyrosine phosphatase family. Non-receptor class CDC14 subfamily.

It carries out the reaction O-phospho-L-tyrosyl-[protein] + H2O = L-tyrosyl-[protein] + phosphate. In terms of biological role, plays a role in the regulation and processing of late viral mRNAs by displaying RNA 5'-triphosphatase and diphosphatase activities. This Autographa californica nuclear polyhedrosis virus (AcMNPV) protein is Tyrosine-protein phosphatase (PTP).